The following is a 243-amino-acid chain: Mannosyl-3-phosphoglycerate phosphatase (243 aa).

Residue D8 is the Nucleophile of the active site. Mg(2+) contacts are provided by D8, D10, S169, and D204.

The protein belongs to the HAD-like hydrolase superfamily. MPGP family. Mg(2+) is required as a cofactor.

It is found in the cytoplasm. It carries out the reaction 2-O-(alpha-D-mannosyl)-3-phosphoglycerate + H2O = (2R)-2-O-(alpha-D-mannosyl)-glycerate + phosphate. Its pathway is carbohydrate biosynthesis; 2-(alpha-D-mannosyl)-D-glycerate biosynthesis; 2-(alpha-D-mannosyl)-D-glycerate from GDP-alpha-D-mannose (MPG route): step 2/2. Functionally, hydrolyzes mannosyl-3-phosphoglycerate (MPG) to form the osmolyte mannosylglycerate (MG). The enzyme is absolutely specific for MPG. The sequence is that of Mannosyl-3-phosphoglycerate phosphatase from Pyrococcus horikoshii (strain ATCC 700860 / DSM 12428 / JCM 9974 / NBRC 100139 / OT-3).